Consider the following 543-residue polypeptide: Carboxypeptidase Y homolog A (543 aa).

The N-terminal stretch at 1-17 is a signal peptide; sequence MRVLPATLLVGAATAAA. Positions 18–124 are excised as a propeptide; it reads PPFQQILGLP…KLEAYDLRVK (107 aa). Disulfide bonds link Cys-179–Cys-419, Cys-313–Cys-327, Cys-337–Cys-360, Cys-344–Cys-353, and Cys-382–Cys-389. An N-linked (GlcNAc...) asparagine glycan is attached at Asn-210. Residue Ser-266 is part of the active site. Asp-458 is a catalytic residue. A glycan (N-linked (GlcNAc...) asparagine) is linked at Asn-509. The active site involves His-520.

The protein belongs to the peptidase S10 family.

Its subcellular location is the vacuole. The catalysed reaction is Release of a C-terminal amino acid with broad specificity.. Its function is as follows. Vacuolar carboxypeptidase involved in degradation of small peptides. Digests preferentially peptides containing an aliphatic or hydrophobic residue in P1' position, as well as methionine, leucine or phenylalanine in P1 position of ester substrate. This is Carboxypeptidase Y homolog A (cpyA) from Aspergillus fumigatus (strain ATCC MYA-4609 / CBS 101355 / FGSC A1100 / Af293) (Neosartorya fumigata).